A 476-amino-acid polypeptide reads, in one-letter code: mRNA cap guanine-N(7) methyltransferase (476 aa).

Basic and acidic residues predominate over residues 1 to 14 (MANSAKAEEYEKMS). The tract at residues 1-146 (MANSAKAEEY…KQKNLEEGHS (146 aa)) is disordered. Over residues 20 to 50 (ASVNSETESSFNINENTTASGTGLSEKTSVC) the composition is skewed to polar residues. Phosphoserine occurs at positions 24, 28, and 29. Composition is skewed to basic and acidic residues over residues 54–68 (DIAR…DLVK) and 84–118 (LDPE…DKSS). S118 carries the post-translational modification Phosphoserine. The Nuclear localization signal motif lies at 126–128 (KRK). Basic and acidic residues predominate over residues 129 to 145 (IALEDVPEKQKNLEEGH). The region spanning 167–475 (SRIFYLRNFN…IYLVFAFEKQ (309 aa)) is the mRNA cap 0 methyltransferase domain. 176 to 177 (NN) is a binding site for mRNA. 6 residues coordinate S-adenosyl-L-methionine: K180, G205, D227, D261, Q284, and Y289.

It belongs to the class I-like SAM-binding methyltransferase superfamily. mRNA cap 0 methyltransferase family. Interacts with importin alpha, leading to stimulate both RNA-binding and methyltransferase activity. Interaction with importin alpha and beta is required for its nuclear localization, importin beta dissociating in response to RanGTP, allowing RNMT-importin alpha to bind RNA substrates. Interacts with elongating form of polymerase II and RNGTT. Interacts with RAMAC, this interaction significantly enhances RNA-binding and cap methyltransferase activity. Widely expressed.

The protein localises to the nucleus. The enzyme catalyses a 5'-end (5'-triphosphoguanosine)-ribonucleoside in mRNA + S-adenosyl-L-methionine = a 5'-end (N(7)-methyl 5'-triphosphoguanosine)-ribonucleoside in mRNA + S-adenosyl-L-homocysteine. Its activity is regulated as follows. Methyltransferase activity is activated by RAMAC. Its function is as follows. Catalytic subunit of the mRNA-capping methyltransferase RNMT:RAMAC complex that methylates the N7 position of the added guanosine to the 5'-cap structure of mRNAs. Binds RNA containing 5'-terminal GpppC. This chain is mRNA cap guanine-N(7) methyltransferase (RNMT), found in Homo sapiens (Human).